Consider the following 515-residue polypeptide: Glucose-6-phosphate 1-dehydrogenase (515 aa).

Residues arginine 53 and lysine 160 each contribute to the NADP(+) site. Positions 190, 194, 228, and 247 each coordinate substrate. Histidine 252 (proton acceptor) is an active-site residue. Residue lysine 352 participates in substrate binding.

This sequence belongs to the glucose-6-phosphate dehydrogenase family.

It carries out the reaction D-glucose 6-phosphate + NADP(+) = 6-phospho-D-glucono-1,5-lactone + NADPH + H(+). The protein operates within carbohydrate degradation; pentose phosphate pathway; D-ribulose 5-phosphate from D-glucose 6-phosphate (oxidative stage): step 1/3. In terms of biological role, catalyzes the oxidation of glucose 6-phosphate to 6-phosphogluconolactone. The protein is Glucose-6-phosphate 1-dehydrogenase of Treponema pallidum (strain Nichols).